The primary structure comprises 266 residues: uncharacterized protein (266 aa).

Residues 12–28 (ILAAGLAIGCAGGYYAY) traverse the membrane as a helical segment. Residues 40-140 (EIYAPFTVNK…RGPFKTTKLD (101 aa)) form the FAD-binding FR-type domain.

Belongs to the flavoprotein pyridine nucleotide cytochrome reductase family. Requires FAD as cofactor.

The protein localises to the mitochondrion outer membrane. This is an uncharacterized protein from Schizosaccharomyces pombe (strain 972 / ATCC 24843) (Fission yeast).